The chain runs to 151 residues: UPF0756 membrane protein Lreu_0946 (151 aa).

A run of 4 helical transmembrane segments spans residues 4–24 (WLFL…SLII), 52–72 (WGVT…QIGF), 77–97 (AAFK…VAIL), and 115–135 (LVLG…GPVI).

It belongs to the UPF0756 family.

It is found in the cell membrane. This chain is UPF0756 membrane protein Lreu_0946, found in Limosilactobacillus reuteri (strain DSM 20016) (Lactobacillus reuteri).